Reading from the N-terminus, the 226-residue chain is Histone H2B.v1 (226 aa).

Residues 100–130 (FNSAKQYPPQPPPAKTATPSSPSSIPAPPIS) form a disordered region. The span at 114–123 (KTATPSSPSS) shows a compositional bias: low complexity.

Belongs to the histone H2B family.

The chain is Histone H2B.v1 (H2Bv1) from Dictyostelium discoideum (Social amoeba).